We begin with the raw amino-acid sequence, 979 residues long: Receptor-type tyrosine-protein phosphatase-like N (979 aa).

An N-terminal signal peptide occupies residues 1 to 37; that stretch reads MRRPRRPGGSGGSGGSGGLRLLVCLLLLSGRPGGCSA. Residues 38–134 form an RESP18 homology domain region; sequence ISAHGCLFDR…HPRDRSGLVP (97 aa). The Lumenal segment spans residues 38–575; the sequence is ISAHGCLFDR…RQAHGISPMR (538 aa). Cysteine 56 and cysteine 65 are oxidised to a cystine. The segment covering 113–130 has biased composition (basic and acidic residues); sequence MERIPRLRPPEPHPRDRS. Disordered regions lie at residues 113 to 173, 289 to 330, and 392 to 443; these read MERI…GSPL, GRAR…AAQP, and MQRG…SSSV. Polar residues predominate over residues 145–155; sequence TQGNPTGSSPA. Residues 303–322 are compositionally biased toward basic and acidic residues; it reads RAEDSSEGHEEEVLGGRGEK. Residues serine 307 and serine 308 each carry the phosphoserine modification. A compositionally biased stretch (polar residues) spans 414–424; sequence SPASSEVQQVL. A sufficient for dimerization of proICA512 region spans residues 449-575; that stretch reads SPLGQSQPTV…RQAHGISPMR (127 aa). N-linked (GlcNAc...) asparagine glycans are attached at residues asparagine 506 and asparagine 524. The helical transmembrane segment at 576 to 600 threads the bilayer; it reads SVLLTLVALAGVAGLLVALAVALCM. The sufficient for dimerization of proICA512 stretch occupies residues 601–732; it reads RHHSRQRDKE…PNTCAAAQDE (132 aa). The Cytoplasmic portion of the chain corresponds to 601-979; the sequence is RHHSRQRDKE…VNAILKALPQ (379 aa). A disordered region spans residues 644 to 680; the sequence is RAEGQPEPSRVSSVSSQFSDAAQASPSSHSSTPSWCE. Residues 648–677 show a composition bias toward low complexity; sequence QPEPSRVSSVSSQFSDAAQASPSSHSSTPS. One can recognise a Tyrosine-protein phosphatase domain in the interval 709–969; that stretch reads LAKEWQALCA…EFALTAVAEE (261 aa). Residue lysine 754 forms a Glycyl lysine isopeptide (Lys-Gly) (interchain with G-Cter in SUMO) linkage.

This sequence belongs to the protein-tyrosine phosphatase family. Receptor class 8 subfamily. As to quaternary structure, homodimer; shown for the unprocessed protein (proICA512) in the endoplasmic reticulum and resolved during protein maturation as ICA512-TMF seems to be predominantly monomeric in secretory granules; however, ICA512-CCF interacts with ICA512-TMF disrupting the ICA512-TMF:SNTB2 complex. The isolated lumenal RESP18 homology domain has been shown to form disulfide-linked homooligomers. Interacts (via cytoplasmic domain) with phosphorylated SNTB2; this protects PTPRN against cleavage by CAPN1 to produce ICA512-CCF. Dephosphorylation of SNTB2 upon insulin stimulation disrupts the interaction and results in PTPRN cleavage. Interacts with SNX19. ICA512-CCF interacts with PIAS4; in the nucleus. Interacts with STAT5B (phosphorylated); down-regulated by ICA512-CCF sumoylation; ICA512-CCF prevents STAT5B dephosphorylation; ICA512-CCF mediates interaction of STAT5B with PIAS4. Interacts (via RESP18 homology domain) with insulin and proinsulin. Interacts with PTPRN2, PTPRA and PTPRE. Post-translationally, subject to proteolytic cleavage at multiple sites. Subject to cleavage on a pair of basic residues. On exocytosis of secretory granules in pancreatic beta-cells ICA512-TMF is transiently inserted in the plasma-membrane and cleaved by mu-type calpain CPN1 to yield ICA512-CCF. O-glycosylated. In terms of processing, N-glycosylated. Post-translationally, sumoylated at two sites including Lys-754. Sumoylation decreases interaction with STAT5. As to expression, detected in pituitary. Detected in brain (at protein level). Detected in brain. Weakly expressed in the colon, intestine, stomach and pancreas.

It localises to the membrane. The protein localises to the cytoplasmic vesicle. The protein resides in the secretory vesicle membrane. Its subcellular location is the perikaryon. It is found in the cell projection. It localises to the axon. The protein localises to the synapse. The protein resides in the cell membrane. Its subcellular location is the endosome. It is found in the nucleus. Plays a role in vesicle-mediated secretory processes. Required for normal accumulation of secretory vesicles in hippocampus, pituitary and pancreatic islets. Required for the accumulation of normal levels of insulin-containing vesicles and preventing their degradation. Plays a role in insulin secretion in response to glucose stimuli. Required for normal accumulation of the neurotransmitters norepinephrine, dopamine and serotonin in the brain. In females, but not in males, required for normal accumulation and secretion of pituitary hormones, such as luteinizing hormone (LH) and follicle-stimulating hormone (FSH). Seems to lack intrinsic enzyme activity. Required to maintain normal levels of renin expression and renin release. May regulate catalytic active protein-tyrosine phosphatases such as PTPRA through dimerization. In terms of biological role, ICA512-TMF regulates dynamics and exocytosis of insulin secretory granules (SGs); binding of ICA512-TMF to SNTB2/beta-2-syntrophin is proposed to restrain SGs mobility and exocytosis by tethering them to the actin cytoskeleton depending on UTRN; the function is inhibited by cytoplasmic ICA512-CFF dimerizing with ICA512-TMF and displacing SNTB2. Functionally, ICA512-CCF translocated to the nucleus promotes expression of insulin and other granule-related genes; the function implicates binding to and regulating activity of STAT5B probably by preventing its dephosphorylation and potentially by inducing its sumoylation by recruiting PIAS4. Enhances pancreatic beta-cell proliferation by converging with signaling by STAT5B and STAT3. ICA512-CCF located in the cytoplasm regulates dynamics and exocytosis of insulin secretory granules (SGs) by dimerizing with ICA512-TMF and displacing SNTB2 thus enhancing SGs mobility and exocytosis. This is Receptor-type tyrosine-protein phosphatase-like N (Ptprn) from Mus musculus (Mouse).